Here is a 356-residue protein sequence, read N- to C-terminus: Nicotinate-nucleotide--dimethylbenzimidazole phosphoribosyltransferase (356 aa).

The active-site Proton acceptor is the Glu-317.

This sequence belongs to the CobT family. Homodimer.

It catalyses the reaction 5,6-dimethylbenzimidazole + nicotinate beta-D-ribonucleotide = alpha-ribazole 5'-phosphate + nicotinate + H(+). The protein operates within nucleoside biosynthesis; alpha-ribazole biosynthesis; alpha-ribazole from 5,6-dimethylbenzimidazole: step 1/2. In terms of biological role, catalyzes the synthesis of alpha-ribazole-5'-phosphate from nicotinate mononucleotide (NAMN) and 5,6-dimethylbenzimidazole (DMB). The protein is Nicotinate-nucleotide--dimethylbenzimidazole phosphoribosyltransferase of Salmonella schwarzengrund (strain CVM19633).